Reading from the N-terminus, the 317-residue chain is Putative cuticle collagen 80 (317 aa).

Residues C80–G262 form a disordered region. Triple-helical region regions lie at residues G92–A124, G137–R199, and G202–D264. Composition is skewed to low complexity over residues Q108–A124, P135–P145, and A175–P206. Composition is skewed to pro residues over residues S207 to P219 and P230 to N240. Residues Q242–G262 show a composition bias toward low complexity.

This sequence belongs to the cuticular collagen family. As to quaternary structure, collagen polypeptide chains are complexed within the cuticle by disulfide bonds and other types of covalent cross-links.

In terms of biological role, nematode cuticles are composed largely of collagen-like proteins. The cuticle functions both as an exoskeleton and as a barrier to protect the worm from its environment. This chain is Putative cuticle collagen 80 (col-80), found in Caenorhabditis elegans.